A 179-amino-acid chain; its full sequence is MAASSTMLSSVATAACAAPAQASMVAPFVGLKSTSAFPVTQKPATGLSTLPSNGGRVQCMKVWPIVGLKKFETLSYLPTLSVESLLKQIEYLIRNGWVPCLEFSLEGFVSRDNNKSPGYYDGRYWTMWKLPMFGCTDAAQVVKEAAECKKEYPAAFIRVIGFDNVRQVQCVSFIVERPE.

A chloroplast-targeting transit peptide spans 1–58; that stretch reads MAASSTMLSSVATAACAAPAQASMVAPFVGLKSTSAFPVTQKPATGLSTLPSNGGRVQ.

This sequence belongs to the RuBisCO small chain family. In terms of assembly, heterohexadecamer of 8 large and 8 small subunits.

Its subcellular location is the plastid. It localises to the chloroplast. In terms of biological role, ruBisCO catalyzes two reactions: the carboxylation of D-ribulose 1,5-bisphosphate, the primary event in carbon dioxide fixation, as well as the oxidative fragmentation of the pentose substrate. Both reactions occur simultaneously and in competition at the same active site. Although the small subunit is not catalytic it is essential for maximal activity. The polypeptide is Ribulose bisphosphate carboxylase small subunit, chloroplastic 1/4 (RBCS1) (Fritillaria agrestis (Stinkbells)).